The following is a 73-amino-acid chain: Translation initiation factor IF-1 (73 aa).

Residues 1 to 73 (MAKKEDTIVL…TKARVVYRHR (73 aa)) enclose the S1-like domain.

Belongs to the IF-1 family. As to quaternary structure, component of the 30S ribosomal translation pre-initiation complex which assembles on the 30S ribosome in the order IF-2 and IF-3, IF-1 and N-formylmethionyl-tRNA(fMet); mRNA recruitment can occur at any time during PIC assembly.

The protein localises to the cytoplasm. Functionally, one of the essential components for the initiation of protein synthesis. Stabilizes the binding of IF-2 and IF-3 on the 30S subunit to which N-formylmethionyl-tRNA(fMet) subsequently binds. Helps modulate mRNA selection, yielding the 30S pre-initiation complex (PIC). Upon addition of the 50S ribosomal subunit IF-1, IF-2 and IF-3 are released leaving the mature 70S translation initiation complex. The chain is Translation initiation factor IF-1 from Chlamydia caviae (strain ATCC VR-813 / DSM 19441 / 03DC25 / GPIC) (Chlamydophila caviae).